We begin with the raw amino-acid sequence, 333 residues long: Fructose-1,6-bisphosphatase class 1 (333 aa).

The Mg(2+) site is built by Glu90, Asp112, Leu114, and Asp115. Residues 115–118 (DGSS), Asn207, and Lys273 each bind substrate. Mg(2+) is bound at residue Glu279.

It belongs to the FBPase class 1 family. In terms of assembly, homotetramer. Mg(2+) serves as cofactor.

It is found in the cytoplasm. The enzyme catalyses beta-D-fructose 1,6-bisphosphate + H2O = beta-D-fructose 6-phosphate + phosphate. It functions in the pathway carbohydrate biosynthesis; gluconeogenesis. This is Fructose-1,6-bisphosphatase class 1 from Azoarcus sp. (strain BH72).